The chain runs to 328 residues: Stress response kinase A (328 aa).

The active-site Proton acceptor is the Asp-201. Residues Asn-206 and Asp-217 each contribute to the Mg(2+) site. Asp-217 is an active-site residue.

Belongs to the SrkA/RdoA protein kinase family. As to quaternary structure, monomer. Mg(2+) is required as a cofactor.

The protein localises to the cytoplasm. It catalyses the reaction L-seryl-[protein] + ATP = O-phospho-L-seryl-[protein] + ADP + H(+). The enzyme catalyses L-threonyl-[protein] + ATP = O-phospho-L-threonyl-[protein] + ADP + H(+). In terms of biological role, a protein kinase that phosphorylates Ser and Thr residues. Probably acts to suppress the effects of stress linked to accumulation of reactive oxygen species. Probably involved in the extracytoplasmic stress response. Also has a role in LPS synthesis, through regulation of the galETK expression. Its function is as follows. A protein kinase that phosphorylates Ser and Thr residues. Probably acts to suppress the effects of stress linked to accumulation of reactive oxygen species. Probably involved in the extracytoplasmic stress response. The protein is Stress response kinase A of Shigella flexneri.